Here is a 1386-residue protein sequence, read N- to C-terminus: Rab3 GTPase-activating protein non-catalytic subunit (1386 aa).

Positions 31–69 (GALRRDPSKTSNWEDDSWGAWEETEPQEPEEEGNTSKTQ) are disordered. Residue serine 38 is modified to Phosphoserine. The segment covering 43 to 63 (WEDDSWGAWEETEPQEPEEEG) has biased composition (acidic residues). Serine 448 bears the Phosphoserine mark. Threonine 899 is modified (phosphothreonine). Serine 914 carries the post-translational modification Phosphoserine. Positions 959 to 973 (REKDVENPDEPREGI) are enriched in basic and acidic residues. Residues 959–982 (REKDVENPDEPREGIARSPPEVSE) form a disordered region. The residue at position 976 (serine 976) is a Phosphoserine.

It belongs to the Rab3-GAP regulatory subunit family. As to quaternary structure, the Rab3 GTPase-activating complex is a heterodimer composed of Rab3gap1 and Rab3gap2. The Rab3 GTPase-activating complex interacts with DMXL2. Interacts with LMAN1.

It localises to the cytoplasm. The protein resides in the endoplasmic reticulum. In terms of biological role, regulatory subunit of the Rab3 GTPase-activating (Rab3GAP) complex composed of RAB3GAP1 and RAB3GAP2, which has GTPase-activating protein (GAP) activity towards various Rab3 subfamily members (RAB3A, RAB3B, RAB3C and RAB3D), RAB5A and RAB43, and guanine nucleotide exchange factor (GEF) activity towards RAB18. As part of the Rab3GAP complex, acts as a GAP for Rab3 proteins by converting active RAB3-GTP to the inactive form RAB3-GDP. Rab3 proteins are involved in regulated exocytosis of neurotransmitters and hormones. The Rab3GAP complex acts as a GEF for RAB18 by promoting the conversion of inactive RAB18-GDP to the active form RAB18-GTP. Recruits and stabilizes RAB18 at the cis-Golgi membrane in fibroblasts where RAB18 is most likely activated. Also involved in RAB18 recruitment at the endoplasmic reticulum (ER) membrane where it maintains proper ER structure. Required for normal eye and brain development. May participate in neurodevelopmental processes such as proliferation, migration and differentiation before synapse formation, and non-synaptic vesicular release of neurotransmitters. The protein is Rab3 GTPase-activating protein non-catalytic subunit of Rattus norvegicus (Rat).